We begin with the raw amino-acid sequence, 126 residues long: Holo-[acyl-carrier-protein] synthase (126 aa).

Residues D9 and E58 each coordinate Mg(2+).

It belongs to the P-Pant transferase superfamily. AcpS family. Mg(2+) serves as cofactor.

The protein resides in the cytoplasm. The enzyme catalyses apo-[ACP] + CoA = holo-[ACP] + adenosine 3',5'-bisphosphate + H(+). Its function is as follows. Transfers the 4'-phosphopantetheine moiety from coenzyme A to a Ser of acyl-carrier-protein. This is Holo-[acyl-carrier-protein] synthase from Edwardsiella ictaluri (strain 93-146).